A 194-amino-acid chain; its full sequence is dTTP/UTP pyrophosphatase (194 aa).

D69 serves as the catalytic Proton acceptor.

The protein belongs to the Maf family. YhdE subfamily. The cofactor is a divalent metal cation.

It is found in the cytoplasm. It catalyses the reaction dTTP + H2O = dTMP + diphosphate + H(+). It carries out the reaction UTP + H2O = UMP + diphosphate + H(+). In terms of biological role, nucleoside triphosphate pyrophosphatase that hydrolyzes dTTP and UTP. May have a dual role in cell division arrest and in preventing the incorporation of modified nucleotides into cellular nucleic acids. The protein is dTTP/UTP pyrophosphatase of Moorella thermoacetica (strain ATCC 39073 / JCM 9320).